The chain runs to 142 residues: Transcription antitermination protein NusB (142 aa).

Belongs to the NusB family.

Functionally, involved in transcription antitermination. Required for transcription of ribosomal RNA (rRNA) genes. Binds specifically to the boxA antiterminator sequence of the ribosomal RNA (rrn) operons. The protein is Transcription antitermination protein NusB of Thermotoga sp. (strain RQ2).